The primary structure comprises 479 residues: GTPase Der (479 aa).

EngA-type G domains follow at residues 3 to 167 (FTLA…EAAA) and 191 to 366 (LQIA…ATWN). Residues 9–16 (GRPNVGKS), 56–60 (DTAGL), 119–122 (NKAE), 197–204 (GRPNAGKS), 244–248 (DTAGM), and 309–312 (NKWD) each bind GTP. The KH-like domain maps to 367–453 (TRISTARLNQ…RLWMRSQADD (87 aa)). Residues 449 to 479 (SQADDNPYKNRKKSTPSRLNKHVRKGETKKG) are disordered. A compositionally biased stretch (basic residues) spans 457 to 472 (KNRKKSTPSRLNKHVR).

This sequence belongs to the TRAFAC class TrmE-Era-EngA-EngB-Septin-like GTPase superfamily. EngA (Der) GTPase family. Associates with the 50S ribosomal subunit.

Its function is as follows. GTPase that plays an essential role in the late steps of ribosome biogenesis. This is GTPase Der from Jannaschia sp. (strain CCS1).